A 197-amino-acid polypeptide reads, in one-letter code: MVNYPHHFIRKQSKPSQISKTINFANRGMSFEAAINATNNYYLSQKIAVIHKKPTPIQIVRVDYPRRSRAKIVEAYFRQASTTDYSGVYKGYYIDFEAKETRHKTSIPMKNFHAHQIKHMSQVLDQKGICFVLLHFSTLRETYLLPASHLIHFYRIDNGGKSMPLDYIKKNGYQVNVSAFPQVPYLDIIDKNILGGD.

Mg(2+)-binding residues include threonine 82, aspartate 84, glutamate 97, and glutamine 116.

This sequence belongs to the RecU family. Mg(2+) serves as cofactor.

The protein resides in the cytoplasm. The enzyme catalyses Endonucleolytic cleavage at a junction such as a reciprocal single-stranded crossover between two homologous DNA duplexes (Holliday junction).. Endonuclease that resolves Holliday junction intermediates in genetic recombination. Cleaves mobile four-strand junctions by introducing symmetrical nicks in paired strands. Promotes annealing of linear ssDNA with homologous dsDNA. Required for DNA repair, homologous recombination and chromosome segregation. The polypeptide is Holliday junction resolvase RecU (Streptococcus mutans serotype c (strain ATCC 700610 / UA159)).